Reading from the N-terminus, the 377-residue chain is Probable G-protein coupled receptor F27E5.8 (377 aa).

Residues 1-34 lie on the Extracellular side of the membrane; sequence MSEQDSSSPKYMRFLLGNFTSAEMVTDGNFLIYC. N18 carries an N-linked (GlcNAc...) asparagine glycan. A helical membrane pass occupies residues 35-55; that stretch reads IEMGLLVIGVLENIFMIGAVF. The Cytoplasmic segment spans residues 56–71; sequence STSCLHLNLRILICNC. The chain crosses the membrane as a helical span at residues 72–92; sequence CLGFILMAVGRAMIAVPLCIA. Residues 93-105 lie on the Extracellular side of the membrane; it reads HLRDVDISSHAWC. A helical transmembrane segment spans residues 106–126; that stretch reads FIANAVHHSSADSVCLSFVFI. Residues 127–144 lie on the Cytoplasmic side of the membrane; it reads MLERTAGTIWSKDYEKTK. The helical transmembrane segment at 145 to 165 threads the bilayer; the sequence is IHIFPCIFAFLQWFIPMFMIL. The Extracellular portion of the chain corresponds to 166 to 195; sequence GNFLDRANRMEHFLLYPHLPCQIEYLTPTM. A helical membrane pass occupies residues 196-216; it reads FMITIFIIVIGFIASVGGITI. Residues 217–251 are Cytoplasmic-facing; sequence VYNKNIKKYNTRDIWFNTVNLSERYQITENIRSTH. A helical transmembrane segment spans residues 252–272; it reads LLFPLLALMLIFSTLSVSVLI. Topologically, residues 273–303 are extracellular; the sequence is YGGYWVSVMTKEPARFEEVVKWFGRGGEAAQ. The chain crosses the membrane as a helical span at residues 304–324; sequence LFDIITAIYTISFPICAFICH. The Cytoplasmic portion of the chain corresponds to 325-377; sequence PNLFRFLRKFIGWNSYAVRPSNLNEIGGFEMSTAPIRTQTEFHFQELSRQWNT.

The protein belongs to the G-protein coupled receptor 1 family.

The protein localises to the cell membrane. This is Probable G-protein coupled receptor F27E5.8 from Caenorhabditis elegans.